Consider the following 429-residue polypeptide: Glutamate-1-semialdehyde 2,1-aminomutase 2 (429 aa).

An N6-(pyridoxal phosphate)lysine modification is found at K268.

This sequence belongs to the class-III pyridoxal-phosphate-dependent aminotransferase family. HemL subfamily. As to quaternary structure, homodimer. Pyridoxal 5'-phosphate is required as a cofactor.

Its subcellular location is the cytoplasm. It carries out the reaction (S)-4-amino-5-oxopentanoate = 5-aminolevulinate. The protein operates within porphyrin-containing compound metabolism; protoporphyrin-IX biosynthesis; 5-aminolevulinate from L-glutamyl-tRNA(Glu): step 2/2. The sequence is that of Glutamate-1-semialdehyde 2,1-aminomutase 2 from Listeria monocytogenes serotype 4a (strain HCC23).